A 396-amino-acid polypeptide reads, in one-letter code: MEFDVVVVGAGPAGSVAAWAAAEAGCDVLILERKAEIGVPKQCAEGISAHGLEHAGIEPQDEWIATEISRALIYAPNGKEFEVPGDGYVLERRVFDKWLVVRAVEAGAEVELLAHARRALLDEGRVVGVEYEGEDGVHEVRARIVIAADGIESRIGRTAGLVPSLKPVEMCTCAQYEMVGVDVEEDATHFFVDAEFFPGGYFWIFPKGEGRANVGLGIRGSESEPGDALKVLNRALEDHELISEAVADAVPVEVNVGGVPVCGPVERTYGDGILLVGDAARQVNPLTGGGLHTSLVCGRIAGEVAAEAIEEDDTSASFLKRYQDRWEEEFGKTFKYALKASKIFSEMSNEELNALAEALDREDILRLVKGEEVVKVAKKVISRKPSLLKYAKHLMK.

FAD contacts are provided by Ala-13, Glu-32, Cys-43, Ala-44, Gly-46, Arg-92, Ala-116, Asp-278, Gly-290, and Leu-291.

It belongs to the geranylgeranyl reductase family. DGGGPL reductase subfamily. FAD serves as cofactor.

It catalyses the reaction a 2,3-bis-O-phytanyl-sn-glycerol 1-phospholipid + 8 A = a 2,3-bis-O-(geranylgeranyl)-sn-glycerol 1-phospholipid + 8 AH2. The catalysed reaction is 2,3-bis-O-(phytanyl)-sn-glycerol 1-phosphate + 8 A = 2,3-bis-O-(geranylgeranyl)-sn-glycerol 1-phosphate + 8 AH2. It carries out the reaction CDP-2,3-bis-O-(geranylgeranyl)-sn-glycerol + 8 AH2 = CDP-2,3-bis-O-(phytanyl)-sn-glycerol + 8 A. The enzyme catalyses archaetidylserine + 8 AH2 = 2,3-bis-O-phytanyl-sn-glycero-3-phospho-L-serine + 8 A. Its pathway is membrane lipid metabolism; glycerophospholipid metabolism. Is involved in the reduction of 2,3-digeranylgeranylglycerophospholipids (unsaturated archaeols) into 2,3-diphytanylglycerophospholipids (saturated archaeols) in the biosynthesis of archaeal membrane lipids. Catalyzes the formation of archaetidic acid (2,3-di-O-phytanyl-sn-glyceryl phosphate) from 2,3-di-O-geranylgeranylglyceryl phosphate (DGGGP) via the hydrogenation of each double bond of the isoprenoid chains. Is also probably able to reduce double bonds of geranyl groups in CDP-2,3-bis-O-(geranylgeranyl)-sn-glycerol and archaetidylserine, thus acting at various stages in the biosynthesis of archaeal membrane lipids. In Methanopyrus kandleri (strain AV19 / DSM 6324 / JCM 9639 / NBRC 100938), this protein is Digeranylgeranylglycerophospholipid reductase 2.